A 315-amino-acid chain; its full sequence is Ribose-phosphate pyrophosphokinase (315 aa).

ATP-binding positions include 37 to 39 (DGE) and 96 to 97 (RQ). Mg(2+)-binding residues include His131 and Asp170. Residue Lys194 is part of the active site. D-ribose 5-phosphate is bound by residues Arg196, Asp220, and 224-228 (DTGGT).

It belongs to the ribose-phosphate pyrophosphokinase family. Class I subfamily. As to quaternary structure, homohexamer. It depends on Mg(2+) as a cofactor.

It localises to the cytoplasm. It catalyses the reaction D-ribose 5-phosphate + ATP = 5-phospho-alpha-D-ribose 1-diphosphate + AMP + H(+). Its pathway is metabolic intermediate biosynthesis; 5-phospho-alpha-D-ribose 1-diphosphate biosynthesis; 5-phospho-alpha-D-ribose 1-diphosphate from D-ribose 5-phosphate (route I): step 1/1. Its function is as follows. Involved in the biosynthesis of the central metabolite phospho-alpha-D-ribosyl-1-pyrophosphate (PRPP) via the transfer of pyrophosphoryl group from ATP to 1-hydroxyl of ribose-5-phosphate (Rib-5-P). The protein is Ribose-phosphate pyrophosphokinase of Shewanella oneidensis (strain ATCC 700550 / JCM 31522 / CIP 106686 / LMG 19005 / NCIMB 14063 / MR-1).